Reading from the N-terminus, the 140-residue chain is Large ribosomal subunit protein uL3 (140 aa).

The protein belongs to the universal ribosomal protein uL3 family. As to quaternary structure, part of the 50S ribosomal subunit. Forms a cluster with proteins L14 and L19.

Functionally, one of the primary rRNA binding proteins, it binds directly near the 3'-end of the 23S rRNA, where it nucleates assembly of the 50S subunit. The polypeptide is Large ribosomal subunit protein uL3 (rplC) (Planobispora rosea).